We begin with the raw amino-acid sequence, 405 residues long: Serine/threonine transporter SstT (405 aa).

A run of 9 helical transmembrane segments spans residues 13 to 33 (GNLV…ATFS), 43 to 63 (IGNL…FILV), 81 to 101 (IVVL…ILSF), 140 to 160 (ALMN…GLAL), 191 to 211 (FGIF…ALAG), 215 to 235 (LLAV…PMIV), 297 to 317 (MAGA…TMGI), 338 to 358 (ASGV…LFGI), and 362 to 382 (IAMQ…SAET).

Belongs to the dicarboxylate/amino acid:cation symporter (DAACS) (TC 2.A.23) family.

It localises to the cell inner membrane. The catalysed reaction is L-serine(in) + Na(+)(in) = L-serine(out) + Na(+)(out). It carries out the reaction L-threonine(in) + Na(+)(in) = L-threonine(out) + Na(+)(out). Involved in the import of serine and threonine into the cell, with the concomitant import of sodium (symport system). This is Serine/threonine transporter SstT from Vibrio cholerae serotype O1 (strain ATCC 39315 / El Tor Inaba N16961).